The chain runs to 256 residues: Thiazole synthase (256 aa).

Catalysis depends on lysine 95, which acts as the Schiff-base intermediate with DXP. 1-deoxy-D-xylulose 5-phosphate contacts are provided by residues glycine 156, 182 to 183, and 204 to 205; these read AG and NT.

Belongs to the ThiG family. Homotetramer. Forms heterodimers with either ThiH or ThiS.

It is found in the cytoplasm. It carries out the reaction [ThiS sulfur-carrier protein]-C-terminal-Gly-aminoethanethioate + 2-iminoacetate + 1-deoxy-D-xylulose 5-phosphate = [ThiS sulfur-carrier protein]-C-terminal Gly-Gly + 2-[(2R,5Z)-2-carboxy-4-methylthiazol-5(2H)-ylidene]ethyl phosphate + 2 H2O + H(+). The protein operates within cofactor biosynthesis; thiamine diphosphate biosynthesis. Functionally, catalyzes the rearrangement of 1-deoxy-D-xylulose 5-phosphate (DXP) to produce the thiazole phosphate moiety of thiamine. Sulfur is provided by the thiocarboxylate moiety of the carrier protein ThiS. In vitro, sulfur can be provided by H(2)S. This chain is Thiazole synthase, found in Escherichia coli O45:K1 (strain S88 / ExPEC).